The sequence spans 1486 residues: Phosphatidylinositol 3-kinase C2 domain-containing subunit gamma (1486 aa).

Residues 285 to 371 enclose the PI3K-RBD domain; it reads KTKFNIHIFI…IQLHLQKSRE (87 aa). The region spanning 521 to 669 is the C2 PI3K-type domain; sequence LPSHLSFTVY…SPVTLQIDFP (149 aa). A PIK helical domain is found at 684 to 860; the sequence is RSNLEEPLKE…QKLLAALQFC (177 aa). The region spanning 929–1207 is the PI3K/PI4K catalytic domain; it reads DHDACSYFTS…KIKESLECFP (279 aa). Residues 935–941 form a G-loop region; sequence YFTSNAL. The catalytic loop stretch occupies residues 1071–1079; the sequence is GVCDRHNDN. The tract at residues 1090 to 1116 is activation loop; the sequence is HIDFGKFLGHAQTFGGIKRDRAPFIFT. The PX domain occupies 1240 to 1352; the sequence is LSTTRSIERA…SFFLSEAVQQ (113 aa). Residues 1369 to 1486 form the C2 domain; the sequence is KKPKVQLVIS…KWYPLGNSII (118 aa).

This sequence belongs to the PI3/PI4-kinase family. As to expression, highly expressed in liver, prostate and testis. Lower levels in small intestine, kidney and pancreas.

It is found in the membrane. It catalyses the reaction a 1,2-diacyl-sn-glycero-3-phospho-(1D-myo-inositol 4-phosphate) + ATP = a 1,2-diacyl-sn-glycero-3-phospho-(1D-myo-inositol-3,4-bisphosphate) + ADP + H(+). The enzyme catalyses a 1,2-diacyl-sn-glycero-3-phospho-(1D-myo-inositol) + ATP = a 1,2-diacyl-sn-glycero-3-phospho-(1D-myo-inositol-3-phosphate) + ADP + H(+). In terms of biological role, generates phosphatidylinositol 3-phosphate (PtdIns3P) and phosphatidylinositol 3,4-bisphosphate (PtdIns(3,4)P2) that act as second messengers. May play a role in SDF1A-stimulated chemotaxis. This chain is Phosphatidylinositol 3-kinase C2 domain-containing subunit gamma (PIK3C2G), found in Homo sapiens (Human).